Consider the following 1025-residue polypeptide: Multidrug resistance protein MdtC (1025 aa).

Transmembrane regions (helical) follow at residues 3-23 (FFALFIYRPVATILLSVAITL), 333-353 (EVEQTLIISVALVILVVFLFL), 360-380 (IIPAVAVPVSLIGTFAAMYLC), 387-407 (LSLMALTIATGFVVDDAIVVL), 431-451 (VGFTVLSMSLSLVAVFLPLLL), 463-483 (FAVTLSVAIGISLLVSLTLTP), 528-548 (LVGVVLLGTIALNIWLYISIP), 853-873 (VILIIAAIATVYIVLGILYES), 875-895 (VHPLTILSTLPSAGVGALLAL), 897-917 (LFNAPFSLIALIGIMLLIGIV), 953-973 (PIMMTTLAALFGALPLVLSGG), and 984-1004 (ITIVGGLVMSQLLTLYTTPVV).

The protein belongs to the resistance-nodulation-cell division (RND) (TC 2.A.6) family. MdtC subfamily. In terms of assembly, part of a tripartite efflux system composed of MdtA, MdtB and MdtC. MdtC forms a heteromultimer with MdtB.

It localises to the cell inner membrane. Functionally, the MdtABC tripartite complex confers resistance against novobiocin and deoxycholate. The protein is Multidrug resistance protein MdtC of Escherichia coli (strain SMS-3-5 / SECEC).